Reading from the N-terminus, the 633-residue chain is Telomere-binding protein 1 (633 aa).

Residues histidine 253–serine 272 form a disordered region. Over residues serine 263 to serine 272 the composition is skewed to polar residues. In terms of domain architecture, Ubiquitin-like spans valine 351–cysteine 430. A sufficient for telomeric DNA binding region spans residues proline 506–serine 615. The HTH myb-type domain maps to glycine 529–serine 588. The SANT domain occupies arginine 534–valine 584. The H-T-H motif DNA-binding region spans tryptophan 557–valine 584.

In terms of assembly, homodimer. As to expression, ubiquitous.

Its subcellular location is the chromosome. It is found in the telomere. Binds the telomeric double-stranded 5'TTTAGGG-3' repeat and regulates telomere length and structure. The chain is Telomere-binding protein 1 (TBP1) from Oryza sativa subsp. japonica (Rice).